Consider the following 970-residue polypeptide: Sodium/calcium exchanger 1 (970 aa).

Residues 1-32 (MLQFSLSPTLSMGFHVIAMVALLFSHVDHISA) form the signal peptide. The Extracellular portion of the chain corresponds to 33–71 (ETEMEGEGNETGECTGSYYCKKGVILPIWEPQDPSFGDK). Asn-41 is a glycosylation site (N-linked (GlcNAc...) asparagine). The helical transmembrane segment at 72-92 (IARATVYFVAMVYMFLGVSII) threads the bilayer. The Cytoplasmic segment spans residues 93–133 (ADRFMSSIEVITSQEKEITIKKPNGETTKTTVRIWNETVSN). The chain crosses the membrane as a helical span at residues 134 to 154 (LTLMALGSSAPEILLSVIEVC). The stretch at 138 to 178 (ALGSSAPEILLSVIEVCGHNFTAGDLGPSTIVGSAAFNMFI) is one Alpha-1 repeat. The Extracellular portion of the chain corresponds to 155 to 167 (GHNFTAGDLGPST). N-linked (GlcNAc...) asparagine glycosylation occurs at Asn-157. The chain crosses the membrane as a helical span at residues 168 to 188 (IVGSAAFNMFIIIALCVYVVP). Residues 189 to 201 (DGETRKIKHLRVF) are Cytoplasmic-facing. Residues 202–222 (FVTAAWSIFAYTWLYIILSVS) form a helical membrane-spanning segment. Topologically, residues 223–228 (SPGVVE) are extracellular. The chain crosses the membrane as a helical span at residues 229–249 (VWEGLLTFFFFPICVVFAWVA). Residues 250-797 (DRRLLFYKYV…FVPPTEYWNG (548 aa)) lie on the Cytoplasmic side of the membrane. Positions 251-270 (RRLLFYKYVYKRYRAGKQRG) are putative calmodulin-binding region. A phosphoserine mark is found at Ser-282 and Ser-389. Calx-beta domains lie at 393-493 (VNTE…VHLS) and 524-624 (ATVT…LEIG). Ca(2+) is bound by residues Glu-417, Asp-453, Asp-478, Asp-479, Ile-481, Glu-483, Glu-486, Asp-530, Asp-531, Asp-532, Glu-548, Asp-584, Asp-610, Glu-611, Glu-612, and Glu-715. Residues 798–818 (WACFIVSILMIGLLTAFIGDL) traverse the membrane as a helical segment. The Extracellular portion of the chain corresponds to 819–821 (ASH). The chain crosses the membrane as a helical span at residues 822 to 842 (FACTIALKDSVTAVVFVALGT). One copy of the Alpha-2 repeat lies at 839–875 (ALGTSVPDTFASKVAATQDQYADASIGNVTGSNAVNV). At 843–871 (SVPDTFASKVAATQDQYADASIGNVTGSN) the chain is on the cytoplasmic side. The chain crosses the membrane as a helical span at residues 872–892 (AVNVFLGIGVAWSIAAIYHAA). Topologically, residues 893–903 (NGEQFKVSPGT) are extracellular. Residues 904 to 924 (LAFSVTLFTIFAFINVGVLLY) form a helical membrane-spanning segment. Topologically, residues 925–941 (RRRPEIGGELGGPRTAK) are cytoplasmic. Residues 942 to 962 (LLTSCLFVLLWLLYIFFSSLE) form a helical membrane-spanning segment. Over 963 to 970 (AYCHIKGF) the chain is Extracellular.

Belongs to the Ca(2+):cation antiporter (CaCA) (TC 2.A.19) family. SLC8 subfamily.

It is found in the cell membrane. The enzyme catalyses Ca(2+)(in) + 3 Na(+)(out) = Ca(2+)(out) + 3 Na(+)(in). With respect to regulation, activated by micromolar levels of Ca(2+). Mediates the exchange of one Ca(2+) ion against three to four Na(+) ions across the cell membrane, and thereby contributes to the regulation of cytoplasmic Ca(2+) levels and Ca(2+)-dependent cellular processes. Contributes to Ca(2+) transport during excitation-contraction coupling in muscle. In a first phase, voltage-gated channels mediate the rapid increase of cytoplasmic Ca(2+) levels due to release of Ca(2+) stores from the endoplasmic reticulum. SLC8A1 mediates the export of Ca(2+) from the cell during the next phase, so that cytoplasmic Ca(2+) levels rapidly return to baseline. Required for normal embryonic heart development and the onset of heart contractions. The protein is Sodium/calcium exchanger 1 (SLC8A1) of Bos taurus (Bovine).